Here is a 67-residue protein sequence, read N- to C-terminus: Large ribosomal subunit protein bL35 (67 aa).

It belongs to the bacterial ribosomal protein bL35 family.

The polypeptide is Large ribosomal subunit protein bL35 (Bartonella henselae (strain ATCC 49882 / DSM 28221 / CCUG 30454 / Houston 1) (Rochalimaea henselae)).